The chain runs to 89 residues: Large ribosomal subunit protein bL27 (89 aa).

The protein belongs to the bacterial ribosomal protein bL27 family.

This is Large ribosomal subunit protein bL27 from Bacteroides fragilis (strain ATCC 25285 / DSM 2151 / CCUG 4856 / JCM 11019 / LMG 10263 / NCTC 9343 / Onslow / VPI 2553 / EN-2).